The chain runs to 397 residues: Elongation factor Tu 1 (397 aa).

A tr-type G domain is found at 10–206 (KPHVNIGTIG…AIDTWIPEPV (197 aa)). A G1 region spans residues 19–26 (GHVDHGKT). 19-26 (GHVDHGKT) is a GTP binding site. Thr26 contributes to the Mg(2+) binding site. Positions 61–65 (GITIS) are G2. A G3 region spans residues 82–85 (DCPG). GTP contacts are provided by residues 82–86 (DCPGH) and 137–140 (NKCD). A G4 region spans residues 137 to 140 (NKCD). A G5 region spans residues 175-177 (SAL).

It belongs to the TRAFAC class translation factor GTPase superfamily. Classic translation factor GTPase family. EF-Tu/EF-1A subfamily. Monomer.

It localises to the cytoplasm. It carries out the reaction GTP + H2O = GDP + phosphate + H(+). GTP hydrolase that promotes the GTP-dependent binding of aminoacyl-tRNA to the A-site of ribosomes during protein biosynthesis. In Alkaliphilus metalliredigens (strain QYMF), this protein is Elongation factor Tu 1.